The sequence spans 483 residues: Transmembrane protein 39B (483 aa).

N9 is a glycosylation site (N-linked (GlcNAc...) asparagine). Transmembrane regions (helical) follow at residues 76–96 (HLLF…VHYI), 114–134 (TSLN…IVLA), 158–182 (LLVA…ILLF), 187–207 (FFNL…LQLG), 281–301 (EVLL…VWFV), 414–434 (VLNI…YSLL), and 440–460 (HHTI…FKLL).

This sequence belongs to the TMEM39 family.

It is found in the endoplasmic reticulum membrane. In terms of biological role, may protect the cells against DNA damage caused by exposure to the cold-warming stress and facilitates tissue damage repair during the recovery phase. The chain is Transmembrane protein 39B from Xenopus tropicalis (Western clawed frog).